The primary structure comprises 492 residues: ATP synthase subunit beta, chloroplastic (492 aa).

170 to 177 provides a ligand contact to ATP; the sequence is GGAGVGKT.

Belongs to the ATPase alpha/beta chains family. F-type ATPases have 2 components, CF(1) - the catalytic core - and CF(0) - the membrane proton channel. CF(1) has five subunits: alpha(3), beta(3), gamma(1), delta(1), epsilon(1). CF(0) has four main subunits: a(1), b(1), b'(1) and c(9-12).

The protein localises to the plastid. It localises to the chloroplast thylakoid membrane. It catalyses the reaction ATP + H2O + 4 H(+)(in) = ADP + phosphate + 5 H(+)(out). Its function is as follows. Produces ATP from ADP in the presence of a proton gradient across the membrane. The catalytic sites are hosted primarily by the beta subunits. This Huperzia lucidula (Shining clubmoss) protein is ATP synthase subunit beta, chloroplastic.